The primary structure comprises 775 residues: Protein STRUBBELIG-RECEPTOR FAMILY 1 (775 aa).

The first 31 residues, 1 to 31, serve as a signal peptide directing secretion; the sequence is MRSMRSGRDNNICFLGFLSFALISLPSLSLA. Residues 32–314 lie on the Extracellular side of the membrane; sequence LTNPDDVAAI…GKEDSFTSKR (283 aa). 6 LRR repeats span residues 101–122, 123–146, 147–169, 171–193, 195–217, and 218–238; these read SLKAMDFSNNHIGGSIPSTLPV, SLQNLFLSGNNFTGTIPESLSSLK, SLSVMSLNNNLLSGKIPDVFQDL, LMINIDLSSNNLSGPLPPSMQNL, TLTSLLLQNNHLSGELDVLQDLP, and LKDLNVENNLFNGPIPEKLLS. The N-linked (GlcNAc...) asparagine glycan is linked to Asn-133. N-linked (GlcNAc...) asparagine glycosylation is found at Asn-181 and Asn-192. An N-linked (GlcNAc...) asparagine glycan is attached at Asn-250. Residues 254–308 form a disordered region; it reads APSPSPETPPSPTSPKRPFFGPPSPNASAGHGQAHVRSPPSDHHPSRPTPQGKED. The segment covering 256 to 278 has biased composition (pro residues); that stretch reads SPSPETPPSPTSPKRPFFGPPSP. Asn-279 carries N-linked (GlcNAc...) asparagine glycosylation. A helical membrane pass occupies residues 315 to 335; that stretch reads IIWISILGAFSFVVLALVCLL. Topologically, residues 336–775 are cytoplasmic; the sequence is CGRKCLRKRE…NGDNQYTGRR (440 aa). The segment at 345-414 is disordered; the sequence is EDSEQLSKPH…VGSESKQESH (70 aa). Residues 367–379 are compositionally biased toward polar residues; the sequence is RSNASMLPPSNTF. Residues 380 to 391 are compositionally biased toward basic and acidic residues; it reads NKDKEARPKERV. The Protein kinase domain maps to 478-756; that stretch reads FSHENLIGTG…EVVQDLSDMI (279 aa).

Belongs to the protein kinase superfamily. Ser/Thr protein kinase family. As to expression, expressed in roots, stems, leaves and flowers. Low expression in seedlings and siliques.

It localises to the membrane. In terms of biological role, not essential for epidermal patterning and not redundant with STRUBBELIG. This is Protein STRUBBELIG-RECEPTOR FAMILY 1 (SRF1) from Arabidopsis thaliana (Mouse-ear cress).